A 116-amino-acid polypeptide reads, in one-letter code: uncharacterized protein (116 aa).

The helical transmembrane segment at 22–42 (LIFLVVNLKVPAVGLELFLLV) threads the bilayer.

It is found in the membrane. This is an uncharacterized protein from Saccharomyces cerevisiae (strain ATCC 204508 / S288c) (Baker's yeast).